A 697-amino-acid chain; its full sequence is Mediator of RNA polymerase II transcription subunit 16 (697 aa).

WD repeat units follow at residues 68 to 107 (GHQE…ANSW), 199 to 241 (RCRV…VSEK), 264 to 308 (DKFP…LPLN), and 622 to 663 (NQGS…CLPV).

This sequence belongs to the Mediator complex subunit 16 family. As to quaternary structure, component of the Mediator complex.

The protein resides in the nucleus. Component of the Mediator complex, a coactivator involved in the regulated transcription of nearly all RNA polymerase II-dependent genes. Mediator functions as a bridge to convey information from gene-specific regulatory proteins to the basal RNA polymerase II transcription machinery. Mediator is recruited to promoters by direct interactions with regulatory proteins and serves as a scaffold for the assembly of a functional preinitiation complex with RNA polymerase II and the general transcription factors. The chain is Mediator of RNA polymerase II transcription subunit 16 (med16) from Xenopus laevis (African clawed frog).